The chain runs to 368 residues: Methionine import ATP-binding protein MetN (368 aa).

Residues 5 to 260 (IELNNLSVQF…PKEALTKQFI (256 aa)) enclose the ABC transporter domain. 41 to 48 (GYSGAGKS) is an ATP binding site.

Belongs to the ABC transporter superfamily. Methionine importer (TC 3.A.1.24) family. In terms of assembly, the complex is composed of two ATP-binding proteins (MetN), two transmembrane proteins (MetI) and a solute-binding protein (MetQ).

Its subcellular location is the cell membrane. It carries out the reaction L-methionine(out) + ATP + H2O = L-methionine(in) + ADP + phosphate + H(+). It catalyses the reaction D-methionine(out) + ATP + H2O = D-methionine(in) + ADP + phosphate + H(+). Part of the ABC transporter complex MetNIQ involved in methionine import. Responsible for energy coupling to the transport system. The polypeptide is Methionine import ATP-binding protein MetN (Lactococcus lactis subsp. cremoris (strain SK11)).